The primary structure comprises 616 residues: Chaperone protein HscA (616 aa).

This sequence belongs to the heat shock protein 70 family.

Functionally, chaperone involved in the maturation of iron-sulfur cluster-containing proteins. Has a low intrinsic ATPase activity which is markedly stimulated by HscB. Involved in the maturation of IscU. This Pectobacterium carotovorum subsp. carotovorum (strain PC1) protein is Chaperone protein HscA.